The sequence spans 411 residues: Argininosuccinate lyase (411 aa).

Belongs to the lyase 1 family. Argininosuccinate lyase subfamily.

It localises to the cytoplasm. It catalyses the reaction 2-(N(omega)-L-arginino)succinate = fumarate + L-arginine. It functions in the pathway amino-acid biosynthesis; L-arginine biosynthesis; L-arginine from L-ornithine and carbamoyl phosphate: step 3/3. In Legionella pneumophila (strain Lens), this protein is Argininosuccinate lyase.